The chain runs to 398 residues: Probable pectate lyase P56 (398 aa).

Positions 1-27 (MEYSYRTKINVLFIVLILFVFAALGTA) are cleaved as a signal peptide. The N-linked (GlcNAc...) asparagine glycan is linked to asparagine 135. Residues aspartate 192, aspartate 217, and aspartate 221 each contribute to the Ca(2+) site. Asparagine 228 carries an N-linked (GlcNAc...) asparagine glycan. Residue arginine 273 is part of the active site.

The protein belongs to the polysaccharide lyase 1 family. Ca(2+) is required as a cofactor. As to expression, expressed in anthers and pollen.

The catalysed reaction is Eliminative cleavage of (1-&gt;4)-alpha-D-galacturonan to give oligosaccharides with 4-deoxy-alpha-D-galact-4-enuronosyl groups at their non-reducing ends.. The protein operates within glycan metabolism; pectin degradation; 2-dehydro-3-deoxy-D-gluconate from pectin: step 2/5. Functionally, might be needed during pollen development and tube growth. This is Probable pectate lyase P56 (LAT56) from Solanum lycopersicum (Tomato).